The sequence spans 724 residues: Catalase-peroxidase (724 aa).

Residues 98–226 (WHSAGTYRIA…LAAVMMGLIY (129 aa)) constitute a cross-link (tryptophyl-tyrosyl-methioninium (Trp-Tyr) (with M-252)). Catalysis depends on His-99, which acts as the Proton acceptor. Residues 226 to 252 (YVNPEGVDGNPDPLKTAQDMRVTFARM) constitute a cross-link (tryptophyl-tyrosyl-methioninium (Tyr-Met) (with W-98)). His-267 is a heme b binding site.

Belongs to the peroxidase family. Peroxidase/catalase subfamily. As to quaternary structure, homodimer or homotetramer. The cofactor is heme b. Post-translationally, formation of the three residue Trp-Tyr-Met cross-link is important for the catalase, but not the peroxidase activity of the enzyme.

It carries out the reaction H2O2 + AH2 = A + 2 H2O. The catalysed reaction is 2 H2O2 = O2 + 2 H2O. Its function is as follows. Bifunctional enzyme with both catalase and broad-spectrum peroxidase activity. This Vibrio cholerae serotype O1 (strain ATCC 39315 / El Tor Inaba N16961) protein is Catalase-peroxidase.